A 413-amino-acid chain; its full sequence is 3-oxo-tetronate kinase (413 aa).

Residues serine 254, 354–357, and glycine 397 contribute to the ATP site; that span reads GGET.

This sequence belongs to the four-carbon acid sugar kinase family.

It catalyses the reaction 3-dehydro-L-erythronate + ATP = 3-dehydro-4-O-phospho-L-erythronate + ADP + H(+). The catalysed reaction is 3-dehydro-D-erythronate + ATP = 3-dehydro-4-O-phospho-D-erythronate + ADP + H(+). Its function is as follows. Catalyzes the ATP-dependent phosphorylation of 3-oxo-tetronate to 3-oxo-tetronate 4-phosphate. The sequence is that of 3-oxo-tetronate kinase from Haemophilus influenzae (strain ATCC 51907 / DSM 11121 / KW20 / Rd).